We begin with the raw amino-acid sequence, 186 residues long: Cysteine protease inhibitor 10 (186 aa).

The N-terminal stretch at 1–7 is a signal peptide; that stretch reads TCHDDDN. 2 disulfide bridges follow: Cys49–Cys101 and Cys149–Cys155.

It belongs to the protease inhibitor I3 (leguminous Kunitz-type inhibitor) family.

The protein localises to the vacuole. Functionally, probable inhibitor of cysteine proteases. May protect the plant by inhibiting proteases of invading organisms. The sequence is that of Cysteine protease inhibitor 10 from Solanum tuberosum (Potato).